The sequence spans 89 residues: uncharacterized protein (89 aa).

Residues 1–89 form the HTH arsR-type domain; that stretch reads MEKYEKAAEI…KEIIKLVDEL (89 aa).

This is an uncharacterized protein from Methanocaldococcus jannaschii (strain ATCC 43067 / DSM 2661 / JAL-1 / JCM 10045 / NBRC 100440) (Methanococcus jannaschii).